A 369-amino-acid polypeptide reads, in one-letter code: Anhydro-N-acetylmuramic acid kinase (369 aa).

12-19 (GTSLDGVD) lines the ATP pocket.

It belongs to the anhydro-N-acetylmuramic acid kinase family.

It carries out the reaction 1,6-anhydro-N-acetyl-beta-muramate + ATP + H2O = N-acetyl-D-muramate 6-phosphate + ADP + H(+). The protein operates within amino-sugar metabolism; 1,6-anhydro-N-acetylmuramate degradation. It participates in cell wall biogenesis; peptidoglycan recycling. In terms of biological role, catalyzes the specific phosphorylation of 1,6-anhydro-N-acetylmuramic acid (anhMurNAc) with the simultaneous cleavage of the 1,6-anhydro ring, generating MurNAc-6-P. Is required for the utilization of anhMurNAc either imported from the medium or derived from its own cell wall murein, and thus plays a role in cell wall recycling. In Escherichia coli (strain K12 / MC4100 / BW2952), this protein is Anhydro-N-acetylmuramic acid kinase.